Here is a 511-residue protein sequence, read N- to C-terminus: DNA nucleotidylexotransferase (511 aa).

The interval 1-26 (MDPLQTAHAGPRKKRPRQTGASMAST) is disordered. The Nuclear localization signal signature appears at 11-17 (PRKKRPR). The BRCT domain maps to 27-124 (PQDVRFQDLV…KPVETTGKHQ (98 aa)). Position 134 is a phosphoserine (Ser-134). The mediates interaction with DNTTIP2 stretch occupies residues 151 to 511 (SQYACQRRTT…DYIEPSERNA (361 aa)). Positions 258–262 (VGLKT) are involved in DNA binding. Residues 333-338 (GFRRGK) and 342-345 (HDVD) each bind a 2'-deoxyribonucleoside 5'-triphosphate. Mg(2+) contacts are provided by Asp-343, Asp-345, and Asp-435. 450–451 (GW) lines the a 2'-deoxyribonucleoside 5'-triphosphate pocket.

Belongs to the DNA polymerase type-X family. As to quaternary structure, interacts with PRP19 and DNTTIP1. Forms a ternary complex with DNTTIP2 and core histone. Released from this complex by PCNA. Interacts with TRERF1. Requires Mg(2+) as cofactor.

The protein resides in the nucleus. It catalyses the reaction DNA(n) + a 2'-deoxyribonucleoside 5'-triphosphate = DNA(n+1) + diphosphate. Functionally, template-independent DNA polymerase which catalyzes the random addition of deoxynucleoside 5'-triphosphate to the 3'-end of a DNA initiator. One of the in vivo functions of this enzyme is the addition of nucleotides at the junction (N region) of rearranged Ig heavy chain and T-cell receptor gene segments during the maturation of B- and T-cells. The chain is DNA nucleotidylexotransferase (DNTT) from Eulemur macaco (Black lemur).